The primary structure comprises 338 residues: Mugineic-acid 3-dioxygenase (338 aa).

The 104-residue stretch at 180 to 283 folds into the Fe2OG dioxygenase domain; that stretch reads DISGGRVVVD…RLSVASFIVP (104 aa). Fe cation is bound by residues His208, Asp210, and His264. Arg274 contacts 2-oxoglutarate.

The protein belongs to the iron/ascorbate-dependent oxidoreductase family. Fe(2+) serves as cofactor. It depends on L-ascorbate as a cofactor. Expressed in roots, but not in leaves.

It catalyses the reaction mugineate + 2-oxoglutarate + O2 = 3-epihydroxymugineate + succinate + CO2 + H(+). The catalysed reaction is 2'-deoxymugineate + 2-oxoglutarate + O2 = 3-epihydroxy-2'-deoxymugineate + succinate + CO2 + H(+). Involved in the biosynthesis of mugineic acid family of phytosiderophores. Hydroxylates the C-3 positions of mugineic acid (MA) and 2'-deoxymugineic acid (DMA). May be involved in boron tolerance. The sequence is that of Mugineic-acid 3-dioxygenase (IDS2) from Hordeum vulgare (Barley).